Reading from the N-terminus, the 165-residue chain is MVDDSTRKTLSNIPLLQIRAGPREKDVWVQRLKEEYQALIKYVENNKQSGSDWFRLESNKEGTKWFGKCWYMHNLLKYEFDVEFDIPVTYPTTAPEIALPELDGKTAKMYRGGKICLTDHFKPLWARNVPKFGIAHAMALGLAPWLAVEVPDLIEKGIITYKDNC.

C116 (glycyl thioester intermediate) is an active-site residue.

It belongs to the ubiquitin-conjugating enzyme family. UFC1 subfamily.

Functionally, E2-like enzyme which forms an intermediate with UFM1 via a thioester linkage. This Drosophila mojavensis (Fruit fly) protein is Ubiquitin-fold modifier-conjugating enzyme 1.